Here is a 367-residue protein sequence, read N- to C-terminus: Putative 12-oxophytodienoate reductase 11 (367 aa).

Residues 26-28 (PLT), A59, and Q101 each bind FMN. Residue 178–181 (HGAH) participates in substrate binding. Y183 serves as the catalytic Proton donor. R230 provides a ligand contact to FMN. R270 contacts substrate. FMN is bound by residues G300 and 321–322 (GR).

The protein belongs to the NADH:flavin oxidoreductase/NADH oxidase family. FMN is required as a cofactor.

Functionally, putative oxophytodienoate reductase that may be involved in the biosynthesis or metabolism of oxylipin signaling molecules. This Oryza sativa subsp. japonica (Rice) protein is Putative 12-oxophytodienoate reductase 11 (OPR11).